A 137-amino-acid polypeptide reads, in one-letter code: Glutamate mutase sigma subunit (137 aa).

In terms of domain architecture, B12-binding spans 3–137 (KKTIVLGVIG…ADMKEVLGVE (135 aa)). Adenosylcob(III)alamin-binding positions include 13–17 (SDCHA), histidine 16, 61–63 (SSL), and 93–97 (NIVVG).

Belongs to the methylaspartate mutase GlmS subunit family. Heterotetramer composed of 2 epsilon subunits (GlmE) and 2 sigma subunits (GlmS). GlmE exists as a homodimer and GlmS as a monomer. Adenosylcob(III)alamin is required as a cofactor.

The enzyme catalyses (2S,3S)-3-methyl-L-aspartate = L-glutamate. It participates in amino-acid degradation; L-glutamate degradation via mesaconate pathway; acetate and pyruvate from L-glutamate: step 1/4. In terms of biological role, catalyzes the carbon skeleton rearrangement of L-glutamate to L-threo-3-methylaspartate ((2S,3S)-3-methylaspartate). This chain is Glutamate mutase sigma subunit, found in Clostridium tetanomorphum.